An 874-amino-acid polypeptide reads, in one-letter code: Coatomer subunit gamma-1 (874 aa).

A compositionally biased stretch (basic and acidic residues) spans 1-11; the sequence is MLKKFDKKDEE. A disordered region spans residues 1–21; sequence MLKKFDKKDEESGGGSNPFQH. 4 HEAT repeats span residues 64–101, 283–320, 322–355, and 356–392; these read TEATEAFFAMTKLFQSNDPTLRRMCYLTIKEMSCIAED, KELAPAVSVLQLFCSSPKAALRYAAVRTLNKVAMKHPS, VTACNLDLENLVTDSNRSIATLAITTLLKTGSES, and SIDRLMKQISSFMSEISDEFKVVVVQAISALCQKYPR. T594 carries the phosphothreonine modification. An interaction with ZNF289/ARFGAP2 region spans residues 609-874; that stretch reads RQEIFQEQLA…PVDIILASVG (266 aa).

Belongs to the COPG family. As to quaternary structure, oligomeric complex that consists of at least the alpha, beta, beta', gamma, delta, epsilon and zeta subunits. Interacts with ZNF289/ARFGAP2 through its C-terminal appendage domain. Interacts with EGFR upon EGF treatment; interaction is essential for regulation of EGF-dependent nuclear transport of EGFR by retrograde trafficking from the Golgi to the ER. The coatomer interacts with KDEL receptors; the interaction is important for retrograde trafficking of KDEL-bearing proteins from the Golgi to the endoplasmic reticulum. Interacts with COPB1. Interacts with TMED10 (via C-terminus). Interacts with TMED2, TMED3, TMED7 and TMED9.

It is found in the cytoplasm. The protein localises to the golgi apparatus membrane. Its subcellular location is the cytoplasmic vesicle. It localises to the COPI-coated vesicle membrane. Functionally, the coatomer is a cytosolic protein complex that binds to dilysine motifs and reversibly associates with Golgi non-clathrin-coated vesicles, which further mediate biosynthetic protein transport from the ER, via the Golgi up to the trans Golgi network. Coatomer complex is required for budding from Golgi membranes, and is essential for the retrograde Golgi-to-ER transport of dilysine-tagged proteins. In mammals, the coatomer can only be recruited by membranes associated to ADP-ribosylation factors (ARFs), which are small GTP-binding proteins; the complex also influences the Golgi structural integrity, as well as the processing, activity, and endocytic recycling of LDL receptors. Required for limiting lipid storage in lipid droplets. Involved in lipid homeostasis by regulating the presence of perilipin family members PLIN2 and PLIN3 at the lipid droplet surface and promoting the association of adipocyte triglyceride lipase (PNPLA2) with the lipid droplet surface to mediate lipolysis. This is Coatomer subunit gamma-1 (COPG1) from Homo sapiens (Human).